We begin with the raw amino-acid sequence, 187 residues long: ATP synthase subunit b 2 (187 aa).

The interval 1–25 (MAESHGGAKGPAAGAHTGAEGGHGG) is disordered. The chain crosses the membrane as a helical span at residues 39 to 59 (LVSLAIFFVVLYVIVSKLALP). The interval 103–122 (RAQAIGNESRDKANAQAETE) is disordered. Basic and acidic residues predominate over residues 110-122 (ESRDKANAQAETE).

The protein belongs to the ATPase B chain family. F-type ATPases have 2 components, F(1) - the catalytic core - and F(0) - the membrane proton channel. F(1) has five subunits: alpha(3), beta(3), gamma(1), delta(1), epsilon(1). F(0) has three main subunits: a(1), b(2) and c(10-14). The alpha and beta chains form an alternating ring which encloses part of the gamma chain. F(1) is attached to F(0) by a central stalk formed by the gamma and epsilon chains, while a peripheral stalk is formed by the delta and b chains.

The protein localises to the cell inner membrane. F(1)F(0) ATP synthase produces ATP from ADP in the presence of a proton or sodium gradient. F-type ATPases consist of two structural domains, F(1) containing the extramembraneous catalytic core and F(0) containing the membrane proton channel, linked together by a central stalk and a peripheral stalk. During catalysis, ATP synthesis in the catalytic domain of F(1) is coupled via a rotary mechanism of the central stalk subunits to proton translocation. In terms of biological role, component of the F(0) channel, it forms part of the peripheral stalk, linking F(1) to F(0). The b'-subunit is a diverged and duplicated form of b found in plants and photosynthetic bacteria. This is ATP synthase subunit b 2 (atpF2) from Bradyrhizobium diazoefficiens (strain JCM 10833 / BCRC 13528 / IAM 13628 / NBRC 14792 / USDA 110).